The primary structure comprises 440 residues: Protein disulfide-isomerase 2-3 (440 aa).

Positions 1–24 are cleaved as a signal peptide; that stretch reads MYKSPLTLLTLLTICFGFFDLSSA. Thioredoxin domains are found at residues 25 to 136 and 154 to 269; these read LYGS…KQIK and SKEK…ELVE. Residues C60 and C63 each act as nucleophile in the active site. A disulfide bond links C60 and C63. Positions 143-163 are disordered; that stretch reads LEGKSKPTGGGSKEKKSEPSA. N-linked (GlcNAc...) asparagine glycosylation occurs at N168. Residues C192 and C195 each act as nucleophile in the active site. C192 and C195 are oxidised to a cystine. A Prevents secretion from ER motif is present at residues 437–440; sequence KDEL.

The protein belongs to the protein disulfide isomerase family. Widely expressed.

Its subcellular location is the endoplasmic reticulum lumen. The enzyme catalyses Catalyzes the rearrangement of -S-S- bonds in proteins.. In terms of biological role, acts as a protein-folding catalyst that interacts with nascent polypeptides to catalyze the formation, isomerization, and reduction or oxidation of disulfide bonds. In Arabidopsis thaliana (Mouse-ear cress), this protein is Protein disulfide-isomerase 2-3 (PDIL2-3).